Here is a 411-residue protein sequence, read N- to C-terminus: Phosphoribosylaminoimidazole-succinocarboxamide synthase, chloroplastic (411 aa).

The transit peptide at 1–53 (MAQCVRSTLNPVRTPQSFTRKAYVKSPAFASVSFLRAVPEFNKYPKPCSLVMS) directs the protein to the chloroplast.

The protein belongs to the SAICAR synthetase family.

The protein resides in the plastid. The protein localises to the chloroplast. The catalysed reaction is 5-amino-1-(5-phospho-D-ribosyl)imidazole-4-carboxylate + L-aspartate + ATP = (2S)-2-[5-amino-1-(5-phospho-beta-D-ribosyl)imidazole-4-carboxamido]succinate + ADP + phosphate + 2 H(+). The protein operates within purine metabolism; IMP biosynthesis via de novo pathway; 5-amino-1-(5-phospho-D-ribosyl)imidazole-4-carboxamide from 5-amino-1-(5-phospho-D-ribosyl)imidazole-4-carboxylate: step 1/2. This Arabidopsis thaliana (Mouse-ear cress) protein is Phosphoribosylaminoimidazole-succinocarboxamide synthase, chloroplastic (PUR7).